A 183-amino-acid chain; its full sequence is MAMYTSESERDWRRVIHDSHGLWCDCGDWREHLYCVYDSHFQRRPTTRAERRAANWRRQMRRLHRLWCFCQDWKCHALYAEWDGKESDDESSASSSGEAPEQQVPAWKTVRAFSRAYHHRINRGLRGTPPPRNLPGYEHASEGWRFCNRRERREDDLRTRAEPDRVVFQLGGVPPRRHRETYV.

The protein belongs to the herpesviridae US1 family.

The polypeptide is Protein US32 (US32) (Homo sapiens (Human)).